A 559-amino-acid polypeptide reads, in one-letter code: Serine/threonine-protein kinase VRK1 (559 aa).

In terms of domain architecture, Protein kinase spans 32–388 (YIVGKQFATG…EDDDEEEEVI (357 aa)). ATP-binding positions include 38-46 (FATGGFGRI) and Lys61. Catalysis depends on Asp167, which acts as the Proton acceptor. Disordered regions lie at residues 315–419 (EAAQ…ATSD) and 448–559 (SSCE…SSEV). Polar residues-rich tracts occupy residues 405–418 (RSFNLGMTSSTATS) and 449–460 (SCESQYESNEPG). A compositionally biased stretch (basic and acidic residues) spans 533 to 542 (TSARYQEKRA). Over residues 545 to 559 (NTKPTFDDSSCSSEV) the composition is skewed to polar residues.

Belongs to the protein kinase superfamily. CK1 Ser/Thr protein kinase family. VRK subfamily. Post-translationally, autophosphorylates in vitro.

The protein resides in the nucleus. Its subcellular location is the cytoplasm. The protein localises to the cajal body. It catalyses the reaction L-seryl-[protein] + ATP = O-phospho-L-seryl-[protein] + ADP + H(+). The enzyme catalyses L-threonyl-[protein] + ATP = O-phospho-L-threonyl-[protein] + ADP + H(+). Functionally, serine/threonine kinase that phosphorylates baf-1, thus regulating the association of baf-1 with chromatin and nuclear membrane proteins during nuclear envelope formation. May act through the egl-17 signaling pathway. Essential in hermaphrodites for formation of the vulva, uterus, and uterine seam cells and for development and maintenance of the somatic gonad and thus the germ line. Acts to prevent cep-1 from triggering an inappropriate cell cycle arrest, thereby promoting germ cell proliferation. Regulates anchor cell polarity and the timing of anchor cell invasion through the basement membranes separating vulval and somatic gonadal cells during the L3 larval stage. The protein is Serine/threonine-protein kinase VRK1 of Caenorhabditis briggsae.